An 833-amino-acid polypeptide reads, in one-letter code: Multiphosphoryl transfer protein 2 (833 aa).

Residues 2-91 (ALIVEFICEL…QWLRDEFPHC (90 aa)) enclose the HPr domain. Catalysis depends on His16, which acts as the Tele-phosphohistidine intermediate; for HPr activity. Phosphohistidine; by EI is present on His16. The interval 143–653 (LGNLPAAKGV…AAKARMAQLD (511 aa)) is PTS EI. The active-site Tele-phosphohistidine intermediate; for PTS EI activity is His301. His301 is subject to Phosphohistidine; by autocatalysis. Residues Arg408 and Arg444 each coordinate phosphoenolpyruvate. Positions 543 and 567 each coordinate Mg(2+). Residues 566 to 567 (ND) and Arg577 each bind phosphoenolpyruvate. The Proton donor; for EI activity role is filled by Cys614. One can recognise a PTS EIIA type-2 domain in the interval 688–830 (PLVTAECITL…DAIASLLQHE (143 aa)). Residue His750 is the Tele-phosphohistidine intermediate; for PTS EIIA activity of the active site. His750 bears the Phosphohistidine; by HPr mark.

Belongs to the PEP-utilizing enzyme family. Mg(2+) serves as cofactor.

It is found in the cytoplasm. The catalysed reaction is L-histidyl-[protein] + phosphoenolpyruvate = N(pros)-phospho-L-histidyl-[protein] + pyruvate. It catalyses the reaction D-fructose(out) + N(pros)-phospho-L-histidyl-[protein] = D-fructose 1-phosphate(in) + L-histidyl-[protein]. In terms of biological role, multifunctional protein that includes general (non sugar-specific) and sugar-specific components of the phosphoenolpyruvate-dependent sugar phosphotransferase system (sugar PTS). This major carbohydrate active transport system catalyzes the phosphorylation of incoming sugar substrates concomitantly with their translocation across the cell membrane. The enzyme II FrwABC PTS system is involved in fructose transport. This chain is Multiphosphoryl transfer protein 2, found in Escherichia coli (strain K12).